Consider the following 24-residue polypeptide: Hemocyanin subunit 4e (24 aa).

Belongs to the tyrosinase family. Hemocyanin subfamily. Hemolymph.

Its subcellular location is the secreted. It localises to the extracellular space. Hemocyanins are copper-containing oxygen carriers occurring freely dissolved in the hemolymph of many mollusks and arthropods. The sequence is that of Hemocyanin subunit 4e from Maja squinado (Mediterranean spider crab).